Consider the following 146-residue polypeptide: Hemoglobin cathodic subunit beta (146 aa).

In terms of domain architecture, Globin spans 2-146 (EWSASERSTI…VVSALSKQYF (145 aa)). His-63 and His-92 together coordinate heme b.

The protein belongs to the globin family. In terms of assembly, heterotetramer of two alpha chains and two beta chains. As to expression, red blood cells.

Functionally, involved in oxygen transport from gills to the various peripheral tissues. This is Hemoglobin cathodic subunit beta (hbb2) from Anguilla anguilla (European freshwater eel).